Here is a 219-residue protein sequence, read N- to C-terminus: Protoglabretal synthase ISM2 (219 aa).

Helical transmembrane passes span 26–46, 59–79, 112–132, 144–164, and 178–198; these read VHAW…VLAG, LMIW…YWLF, AVVG…LFAV, ILQL…FITA, and YYKY…LIII. Residues 55–197 form the EXPERA domain; it reads TDKWLMIWWA…TWLLFPALII (143 aa).

This sequence belongs to the EBP family.

Its subcellular location is the membrane. The enzyme catalyses 7,8-epoxymelianol = protoglabretal. Its pathway is secondary metabolite biosynthesis; terpenoid biosynthesis. In terms of biological role, isomerase involved in the biosynthesis of glabretanes triterpene natural products such as glabretal, a component with in vitro antiproliferative properties on lymphocytes. Catalyzes the conversion of 7,8-epoxymelianol to protoglabretal via skeletal rearrangements. This Ailanthus altissima (Tree-of-heaven) protein is Protoglabretal synthase ISM2.